The chain runs to 331 residues: Anthranilate phosphoribosyltransferase (331 aa).

Residues Gly81, 84–85 (GD), Ser89, 91–94 (NCST), 109–117 (KHGNRAVSS), and Ser121 each bind 5-phospho-alpha-D-ribose 1-diphosphate. An anthranilate-binding site is contributed by Gly81. Ser93 is a binding site for Mg(2+). Asn112 is an anthranilate binding site. Residue Arg167 coordinates anthranilate. Asp226 and Glu227 together coordinate Mg(2+).

This sequence belongs to the anthranilate phosphoribosyltransferase family. As to quaternary structure, homodimer. Mg(2+) serves as cofactor.

The catalysed reaction is N-(5-phospho-beta-D-ribosyl)anthranilate + diphosphate = 5-phospho-alpha-D-ribose 1-diphosphate + anthranilate. It functions in the pathway amino-acid biosynthesis; L-tryptophan biosynthesis; L-tryptophan from chorismate: step 2/5. Catalyzes the transfer of the phosphoribosyl group of 5-phosphorylribose-1-pyrophosphate (PRPP) to anthranilate to yield N-(5'-phosphoribosyl)-anthranilate (PRA). The sequence is that of Anthranilate phosphoribosyltransferase from Oleidesulfovibrio alaskensis (strain ATCC BAA-1058 / DSM 17464 / G20) (Desulfovibrio alaskensis).